An 887-amino-acid polypeptide reads, in one-letter code: Inter-alpha-trypsin inhibitor heavy chain H3 (887 aa).

The N-terminal stretch at 1 to 21 (MVTLWWPCLVLALLSGLETSG) is a signal peptide. A propeptide spanning residues 22–33 (FPRSPLRLLGKR) is cleaved from the precursor. The region spanning 29–158 (LLGKRSLPEG…KVIFELTYEE (130 aa)) is the VIT domain. Asn-91 carries an N-linked (GlcNAc...) asparagine glycan. Residues 282 to 442 (PKNIAFVIDV…YNFLESLALE (161 aa)) form the VWFA domain. N-linked (GlcNAc...) asparagine glycosylation is present at Asn-580. Asp-647 is modified (aspartate 1-(chondroitin 4-sulfate)-ester). The propeptide occupies 648–887 (PHFIIQVPGK…HTDYIVPSLF (240 aa)).

Belongs to the ITIH family. In terms of assembly, I-alpha-I plasma protease inhibitors are assembled from one or two heavy chains (HC) and one light chain, bikunin. Pre-alpha-inhibitor (P-alpha-I) is composed of ITIH3/HC3 and bikunin. Heavy chains are linked to bikunin via chondroitin 4-sulfate esterified to the alpha-carboxyl of the C-terminal aspartate after propeptide cleavage.

It is found in the secreted. Its function is as follows. May act as a carrier of hyaluronan in serum or as a binding protein between hyaluronan and other matrix protein, including those on cell surfaces in tissues to regulate the localization, synthesis and degradation of hyaluronan which are essential to cells undergoing biological processes. This is Inter-alpha-trypsin inhibitor heavy chain H3 (Itih3) from Rattus norvegicus (Rat).